Here is a 617-residue protein sequence, read N- to C-terminus: Na(+)/H(+) antiporter NhaA 1 (617 aa).

The na(+)/H(+) antiporter NhaA stretch occupies residues 1 to 433 (MTVTEQTTAR…GWAIFRITDW (433 aa)). The next 11 membrane-spanning stretches (helical) occupy residues 33–53 (AAALLLTFTVIAILWANSPWA), 75–95 (MTVKHLVNDALMTFFFFIVGL), 113–133 (AVPVVAAAAGLIVPAIVFLAF), 141–161 (HAWGVVISTDTAFLVGALAII), 171–191 (LFLLTLAVVDDVGALVAIAVF), 194–214 (DAIQVGPLVVAVAVLVALALV), 234–254 (VALYLAGIHPTLAGVAVALLI), 304–324 (VGPAVSFVILPLFALVNAGVL), 340–360 (WGVVAGLVIGKFVGITGATWL), 378–398 (IAGGAALSGIGFTISLFIVDI), and 411–431 (IGVLAASVLAFVFGWAIFRIT). The Thioredoxin domain occupies 434–617 (LSPPEPVGLK…LIRALEAGRR (184 aa)).

This sequence in the N-terminal section; belongs to the NhaA Na(+)/H(+) (TC 2.A.33) antiporter family.

The protein localises to the cell membrane. The enzyme catalyses Na(+)(in) + 2 H(+)(out) = Na(+)(out) + 2 H(+)(in). In terms of biological role, na(+)/H(+) antiporter that extrudes sodium in exchange for external protons. The polypeptide is Na(+)/H(+) antiporter NhaA 1 (Mycolicibacterium vanbaalenii (strain DSM 7251 / JCM 13017 / BCRC 16820 / KCTC 9966 / NRRL B-24157 / PYR-1) (Mycobacterium vanbaalenii)).